The sequence spans 651 residues: Maternal embryonic leucine zipper kinase (651 aa).

Residues 13-265 (YELHETVGTG…VKHLLNHPWL (253 aa)) enclose the Protein kinase domain. ATP is bound by residues 19–27 (VGTGGFAKV) and Lys-42. Asp-134 functions as the Proton acceptor in the catalytic mechanism. Thr-169 bears the Phosphothreonine; by autocatalysis mark. Residue Ser-173 is modified to Phosphoserine; by autocatalysis. Residues 284–323 (IDEDCVTELSVFYKYSRTSTTRLISEWSYDHITASYLLLH) form a UBA-like region. Positions 328–651 (HGKAVRLKHP…VEDILSSCKV (324 aa)) are autoinhibitory region. The disordered stretch occupies residues 410 to 490 (SAPATPVVQR…TPTKKPIGTG (81 aa)). Position 414 is a phosphothreonine (Thr-414). Over residues 423–441 (HKNEDKENSNTAVARDENV) the composition is skewed to basic and acidic residues. Thr-449, Thr-451, Thr-481, and Thr-483 each carry phosphothreonine. A compositionally biased stretch (basic and acidic residues) spans 471–483 (QTKEKNQSKETPT). Residues Ser-498, Ser-505, and Ser-517 each carry the phosphoserine modification. One can recognise a KA1 domain in the interval 602–651 (SDFGKVTMQFELEVCQLSKSEVVGIRRQRLKGDAWVYKRLVEDILSSCKV).

Belongs to the protein kinase superfamily. CAMK Ser/Thr protein kinase family. SNF1 subfamily. Autophosphorylated: autophosphorylation of the T-loop at Thr-169 and Ser-173 is required for activation. Phosphorylated by the maturation promoting factor (MPF), composed of cdk1 and a cyclin-B. Also phosphorylated by some MAPK. Phosphorylated during oocyte maturation. Dephosphorylation destabilizes the protein. There is some ambiguity for some phosphosites: Thr-481/Thr-483 and Ser-505/Ser-517. Post-translationally, degraded when cells exit mitosis.

It localises to the cell membrane. The enzyme catalyses L-seryl-[protein] + ATP = O-phospho-L-seryl-[protein] + ADP + H(+). It catalyses the reaction L-threonyl-[protein] + ATP = O-phospho-L-threonyl-[protein] + ADP + H(+). Its activity is regulated as follows. Activated by autophosphorylation of the T-loop at Thr-169 and Ser-173: in contrast to other members of the SNF1 subfamily, phosphorylation at Thr-169 is not mediated by STK11/LKB1 but via autophosphorylation instead. In terms of biological role, serine/threonine-protein kinase involved in various processes such as cell cycle regulation, self-renewal of stem cells, apoptosis and splicing regulation. Also plays a role in primitive hematopoiesis, possibly by affecting the expression of genes critical for hematopoiesis. Plays a role in cytokinesis during early development. The chain is Maternal embryonic leucine zipper kinase (melk) from Xenopus laevis (African clawed frog).